An 82-amino-acid chain; its full sequence is MKTIFAVTLLLFAIYVPECMPCHQSGCSPGFCCWLTYPPTTATDPYSCVSNSTLGVSCGPCGCLQGYNCTSNGGCQLLRRVG.

The signal sequence occupies residues 1-21; that stretch reads MKTIFAVTLLLFAIYVPECMP. Cystine bridges form between Cys22-Cys33, Cys27-Cys48, Cys32-Cys61, Cys58-Cys69, and Cys63-Cys75.

In terms of tissue distribution, expressed by the venom gland.

It localises to the secreted. Probable ion channel inhibitor. The polypeptide is U17-hexatoxin-Hi1a (Hadronyche infensa (Fraser island funnel-web spider)).